The following is a 206-amino-acid chain: Ribosomal RNA small subunit methyltransferase G (206 aa).

Residues Gly73, Leu78, 124-125, and Arg139 each bind S-adenosyl-L-methionine; that span reads VE.

It belongs to the methyltransferase superfamily. RNA methyltransferase RsmG family.

It is found in the cytoplasm. The enzyme catalyses guanosine(527) in 16S rRNA + S-adenosyl-L-methionine = N(7)-methylguanosine(527) in 16S rRNA + S-adenosyl-L-homocysteine. In terms of biological role, specifically methylates the N7 position of guanine in position 527 of 16S rRNA. In Sodalis glossinidius (strain morsitans), this protein is Ribosomal RNA small subunit methyltransferase G.